We begin with the raw amino-acid sequence, 119 residues long: MKKKYRIKKNDDFQKVFRRGKSFANRQFVVYTLKQEGSNHFRIGLSVSKKIGNAVCRNRIKRYIRQSFHELEDQINPENEYIIIARKPAANMDFHEVKKSLIHVLKVGRVLKQKPNNSK.

This sequence belongs to the RnpA family. As to quaternary structure, consists of a catalytic RNA component (M1 or rnpB) and a protein subunit.

The catalysed reaction is Endonucleolytic cleavage of RNA, removing 5'-extranucleotides from tRNA precursor.. In terms of biological role, RNaseP catalyzes the removal of the 5'-leader sequence from pre-tRNA to produce the mature 5'-terminus. It can also cleave other RNA substrates such as 4.5S RNA. The protein component plays an auxiliary but essential role in vivo by binding to the 5'-leader sequence and broadening the substrate specificity of the ribozyme. The chain is Ribonuclease P protein component from Listeria welshimeri serovar 6b (strain ATCC 35897 / DSM 20650 / CCUG 15529 / CIP 8149 / NCTC 11857 / SLCC 5334 / V8).